Here is a 245-residue protein sequence, read N- to C-terminus: Thiopurine S-methyltransferase (245 aa).

The residue at position 14 (serine 14) is a Phosphoserine. 29–40 serves as a coordination point for S-adenosyl-L-methionine; the sequence is WQGKWVTGKTIF. Residue phenylalanine 40 participates in substrate binding. Residue lysine 58 is modified to N6-acetyllysine. The S-adenosyl-L-methionine site is built by leucine 69, glutamate 90, and arginine 152.

This sequence belongs to the class I-like SAM-binding methyltransferase superfamily. TPMT family. As to quaternary structure, monomer.

The protein resides in the cytoplasm. The enzyme catalyses S-adenosyl-L-methionine + a thiopurine = S-adenosyl-L-homocysteine + a thiopurine S-methylether.. This chain is Thiopurine S-methyltransferase (TPMT), found in Equus caballus (Horse).